Reading from the N-terminus, the 172-residue chain is Ribosome maturation factor RimM (172 aa).

One can recognise a PRC barrel domain in the interval 96 to 169 (EGYFYHFQLQ…RMEIKLLPGL (74 aa)).

The protein belongs to the RimM family. In terms of assembly, binds ribosomal protein uS19.

It localises to the cytoplasm. An accessory protein needed during the final step in the assembly of 30S ribosomal subunit, possibly for assembly of the head region. Essential for efficient processing of 16S rRNA. May be needed both before and after RbfA during the maturation of 16S rRNA. It has affinity for free ribosomal 30S subunits but not for 70S ribosomes. This chain is Ribosome maturation factor RimM, found in Syntrophomonas wolfei subsp. wolfei (strain DSM 2245B / Goettingen).